The sequence spans 177 residues: Large ribosomal subunit protein uL6 (177 aa).

It belongs to the universal ribosomal protein uL6 family. In terms of assembly, part of the 50S ribosomal subunit.

In terms of biological role, this protein binds to the 23S rRNA, and is important in its secondary structure. It is located near the subunit interface in the base of the L7/L12 stalk, and near the tRNA binding site of the peptidyltransferase center. This chain is Large ribosomal subunit protein uL6, found in Pseudomonas fluorescens (strain ATCC BAA-477 / NRRL B-23932 / Pf-5).